Reading from the N-terminus, the 361-residue chain is Collagenase (361 aa).

The protein belongs to the peptidase U32 family. In terms of assembly, homodimer. The cofactor is a metal cation.

Activity somewhat enhanced by calcium ions, inhibited by zinc and Fe(3+) ions and by p-chloromercuribenzoic acid and EDTA. Activity is enhanced by salivary peptide cystatin and reduced by salivary peptide histatin. Functionally, has collagenase activity. Active on soluble collagen, reconstituted type I collagen, heat denatured type I collagen and azocoll, but not gelatin or the synthetic bacterial collagenase substrate PZ-PLGPA. May play a role in virulence. The polypeptide is Collagenase (Porphyromonas gingivalis (Bacteroides gingivalis)).